The primary structure comprises 513 residues: Putative BTB/POZ domain-containing protein L55 (513 aa).

The BTB domain occupies 11-83 (SPIKIILQDI…FHGYKMEISD (73 aa)).

The protein belongs to the mimivirus BTB/WD family.

The protein is Putative BTB/POZ domain-containing protein L55 of Acanthamoeba polyphaga (Amoeba).